Consider the following 282-residue polypeptide: UPF0759 protein YunF (282 aa).

Belongs to the UPF0759 family.

The protein is UPF0759 protein YunF (yunF) of Bacillus subtilis (strain 168).